An 866-amino-acid polypeptide reads, in one-letter code: Dynamin-2 (866 aa).

The 267-residue stretch at 28 to 294 folds into the Dynamin-type G domain; the sequence is HLDLPQIAVV…LTNHIRESLP (267 aa). The interval 38–45 is G1 motif; it reads GGQSAGKS. GDP contacts are provided by serine 41, glycine 43, lysine 44, serine 45, serine 46, arginine 59, and glycine 60. Residues 64 to 66 form a G2 motif region; sequence VTR. A G3 motif region spans residues 136-139; the sequence is DLPG. The interval 205 to 208 is G4 motif; that stretch reads TKLD. Residues lysine 206, aspartate 208, and aspartate 211 each coordinate GDP. Residue tyrosine 231 is modified to Phosphotyrosine. Positions 235–238 are G5 motif; sequence VNRS. GDP is bound by residues asparagine 236, arginine 237, and glutamine 239. Lysine 299 is subject to N6-acetyllysine. Residues 515-621 form the PH domain; sequence QVIRRGWLTI…WKASFLRAGV (107 aa). Tyrosine 593 bears the Phosphotyrosine mark. Position 594 is an N6-acetyllysine (lysine 594). Positions 649-740 constitute a GED domain; sequence VETIRNLVDS…IIGDISTSTV (92 aa). Positions 737-866 are disordered; sequence TSTVSTPVPP…IRPAEPSLLD (130 aa). Phosphothreonine is present on threonine 751. Residues 752–763 are compositionally biased toward polar residues; that stretch reads WIQNTSSHSPTP. A Phosphoserine; by CDK1 modification is found at serine 760. Composition is skewed to pro residues over residues 784–794, 802–811, and 822–851; these read TPGPPLIPVPV, PPIPSRPGPH, and SAPP…PAAP.

Belongs to the TRAFAC class dynamin-like GTPase superfamily. Dynamin/Fzo/YdjA family. Oligomerizes into a helical polymer that self-assembles around the vesicle membrane, when associated to the menbrane through lipid binding. Interacts with SHANK1 and SHANK2. Interacts with SNX9. Interacts (via C-terminal proline-rich domain (PRD)) with SNX18 (via SH3 domain); this interaction regulates ATG9A and ATG16L1 trafficking from recycling endosomes to sites of autophagosome formation. Interacts with SNX33 (via SH3 domain). Interacts with MYO1E (via SH3 domain). Interacts with PSTPIP1 (via SH3 domain). Interacts with CTNND2. Interacts (via C-terminal proline-rich domain (PRD)) with BIN1 (via SH3 domain); this interaction allows the recruitment of DNM2 to the membrane tubules and inhibits self-assembly-stimulated GTPase activity on the membrane. Interacts with GABARAP, GABARAPL1 and GABARAPL2. Interacts with MAP1LC3B (the lipidate and non-lipidated LC3 form); this interaction mediates recycling endosome scission leading to autophagosome release. Interacts with ITSN1. Interacts with MYOF. Interacts (via C-terminal proline-rich domain (PRD)) with SH3BP4 (via SH3 domain); this interaction controls the GTPase activity and is prevented by EGFR-induced tyrosine phosphorylation of either DNM2 or SH3BP4. May interact with PIK3C3. May be a component of a complex composed of RAB5A (in GDP-bound form), DYN2 and PIK3C3. Interacts with SDC4; this interaction is markedly enhanced at focal ahesion site upon induction of focal adhesions and stress-fiber formation. Interacts with ACTN1. Interacts with CTTN; this interaction stimulates the intrinsic GTPase activity of DNM2 and stabilizes the association of DNM2 and actin filaments; in addition this interaction is stimulated by ligand binding to the receptor, leading to the recruitment of the DNM2-CTTN complex to the sequestered receptor-ligand complex to its internalization. Interacts with NOSTRIN (via SH3 domain); this interaction allows the recruitment of NOS3 to dynamin-positive structures. Interacts with TUBG1; this interaction may participate in centrosome cohesion. In terms of processing, phosphorylation at Ser-844 by GSK3-alpha relieves the inhibition of BIN1 and promotes endocytosis. Phosphorylation at Ser-760 by CDK1 is greatly increased upon mitotic entry. It regulates cytokinesis downstream of calcineurin, and does not affect clathrin-mediated endocytosis. Dephosphorylated by calcineurin/PP2 during cytokinesis in a Ca(2+)- and calmodulin-dependent manner. Phosphorylated on tyrosine residues by EGFR and after activation of SRC.

Its subcellular location is the cytoplasm. It localises to the cytoskeleton. The protein localises to the cytoplasmic vesicle. It is found in the clathrin-coated vesicle. The protein resides in the cell projection. Its subcellular location is the uropodium. It localises to the endosome. The protein localises to the microtubule organizing center. It is found in the centrosome. The protein resides in the centriole. Its subcellular location is the recycling endosome. It localises to the phagocytic cup. The protein localises to the phagosome membrane. It is found in the podosome. The protein resides in the cell junction. Its subcellular location is the postsynaptic density. It localises to the synapse. The protein localises to the synaptosome. It is found in the midbody. The protein resides in the membrane. Its subcellular location is the clathrin-coated pit. It carries out the reaction GTP + H2O = GDP + phosphate + H(+). In terms of biological role, catalyzes the hydrolysis of GTP and utilizes this energy to mediate vesicle scission at plasma membrane during endocytosis and filament remodeling at many actin structures during organization of the actin cytoskeleton. Plays an important role in vesicular trafficking processes, namely clathrin-mediated endocytosis (CME), exocytic and clathrin-coated vesicle from the trans-Golgi network, and PDGF stimulated macropinocytosis. During vesicular trafficking process, associates to the membrane, through lipid binding, and self-assembles into ring-like structure through oligomerization to form a helical polymer around the vesicle membrane and leading to vesicle scission. Plays a role in organization of the actin cytoskeleton by mediating arrangement of stress fibers and actin bundles in podocytes. During organization of the actin cytoskeleton, self-assembles into ring-like structure that directly bundles actin filaments to form typical membrane tubules decorated with dynamin spiral polymers. Self-assembly increases GTPase activity and the GTP hydrolysis causes the rapid depolymerization of dynamin spiral polymers, and results in dispersion of actin bundles. Remodels, through its interaction with CTTN, bundled actin filaments in a GTPase-dependent manner and plays a role in orchestrating the global actomyosin cytoskeleton. The interaction with CTTN stabilizes the interaction of DNM2 and actin filaments and stimulates the intrinsic GTPase activity that results in actin filament-barbed ends and increases the sensitivity of filaments in bundles to the actin depolymerizing factor, CFL1. Plays a role in the autophagy process, by participating in the formation of ATG9A vesicles destined for the autophagosomes through its interaction with SNX18, by mediating recycling endosome scission leading to autophagosome release through MAP1LC3B interaction. Also regulates maturation of apoptotic cell corpse-containing phagosomes by recruiting PIK3C3 to the phagosome membrane. Also plays a role in cytokinesis. May participate in centrosome cohesion through its interaction with TUBG1. Plays a role in the regulation of neuron morphology, axon growth and formation of neuronal growth cones. Involved in membrane tubulation. This chain is Dynamin-2, found in Bos taurus (Bovine).